We begin with the raw amino-acid sequence, 251 residues long: 5'-nucleotidase SurE (251 aa).

Positions 8, 9, 40, and 95 each coordinate a divalent metal cation.

It belongs to the SurE nucleotidase family. It depends on a divalent metal cation as a cofactor.

It localises to the cytoplasm. The enzyme catalyses a ribonucleoside 5'-phosphate + H2O = a ribonucleoside + phosphate. Functionally, nucleotidase that shows phosphatase activity on nucleoside 5'-monophosphates. The polypeptide is 5'-nucleotidase SurE (Desulfitobacterium hafniense (strain DSM 10664 / DCB-2)).